Consider the following 148-residue polypeptide: Large ribosomal subunit protein bL9 (148 aa).

It belongs to the bacterial ribosomal protein bL9 family.

In terms of biological role, binds to the 23S rRNA. In Chloroflexus aurantiacus (strain ATCC 29366 / DSM 635 / J-10-fl), this protein is Large ribosomal subunit protein bL9.